Reading from the N-terminus, the 705-residue chain is Glycine--tRNA ligase beta subunit (705 aa).

Belongs to the class-II aminoacyl-tRNA synthetase family. In terms of assembly, tetramer of two alpha and two beta subunits.

The protein localises to the cytoplasm. It catalyses the reaction tRNA(Gly) + glycine + ATP = glycyl-tRNA(Gly) + AMP + diphosphate. This Persephonella marina (strain DSM 14350 / EX-H1) protein is Glycine--tRNA ligase beta subunit.